Consider the following 652-residue polypeptide: Neuroendocrine convertase 2 (652 aa).

The first 22 residues, 1–22, serve as a signal peptide directing secretion; the sequence is MKNTHVDLICVFLSIFIGIGEA. Residues 23–107 constitute a propeptide that is removed on maturation; sequence VDVYTNHFHV…QLKGYTRTKR (85 aa). In terms of domain architecture, Peptidase S8 spans 136–481; that stretch reads QWYLKNTGQA…FGVLDAAEMV (346 aa). Residue Asn167 is glycosylated (N-linked (GlcNAc...) asparagine). Active-site charge relay system residues include Asp174 and His215. Intrachain disulfides connect Cys232/Cys382 and Cys324/Cys354. An N-linked (GlcNAc...) asparagine glycan is attached at Asn290. Catalysis depends on Ser390, which acts as the Charge relay system. An N-linked (GlcNAc...) asparagine glycan is attached at Asn451. One can recognise a P/Homo B domain in the interval 489–625; the sequence is TSPPRYHCTA…ELMLHGTREA (137 aa). A disulfide bridge links Cys496 with Cys522. The tract at residues 501-652 is required for ubiquitination-mediated degradation; sequence IDTPHEIPAD…TVQKAHKRSH (152 aa). Asn542 is a glycosylation site (N-linked (GlcNAc...) asparagine).

This sequence belongs to the peptidase S8 family. Furin subfamily. Interacts (via C-terminus) with F-box protein fsn-1 (via SPRY domain); the interaction results in egl-3 proteasomal degradation. Ubiquitinated. In terms of tissue distribution, expressed in head and tail ganglia. Expressed in neurons including mechanosensory and motor neurons, and interneurons (at protein level). Expressed in the nerve ring, ventral nerve cord and intestine.

Its subcellular location is the cell projection. It localises to the axon. The protein resides in the cytoplasmic vesicle. It is found in the secretory vesicle lumen. The protein localises to the secreted. The catalysed reaction is Release of protein hormones and neuropeptides from their precursors, generally by hydrolysis of -Lys-Arg-|- bonds.. Functionally, serine endoprotease which cleaves preproteins at paired basic amino acids. Processes FMRFamide-like (flp) and neuropeptide-like protein (nlp) neuropeptides. Probably by processing flp-1 and flp-18, modulates the neuronal excitation-inhibition balance and thus the level of activity of the locomotor circuit. Regulates sensitivity to mechanosensory stimuli. By processing neuropeptides, modulates basal acetylcholine release at the ventral cord neuromuscular junctions. Probably by processing flp neuropeptides, regulates the turning step of male mating behavior. Cleaves pro-insulin-like proteins ins-3, ins-4 and ins-6 into their mature active forms. Together with convertase kpc-1, cleaves pro-insulin-like protein ins-18. By controlling ins-4 and ins-6 processing and thus the activation of the daf-2/InsR pathway, negatively modulates synapse development and synaptic transmission at neuromuscular junctions. Similarly, by controlling ins-4 and ins-6 processing, negatively regulates dauer formation under optimal environmental conditions. Under adverse environmental conditions, may promote dauer formation by processing ins-18, a daf-2/InsR antagonist. May cleave dense-core vesicle membrane protein ida-1. Involved in egg-laying, fat storage and locomotion. This is Neuroendocrine convertase 2 from Caenorhabditis elegans.